The sequence spans 322 residues: Aspartate carbamoyltransferase catalytic subunit (322 aa).

Residues R65 and T66 each contribute to the carbamoyl phosphate site. Position 93 (K93) interacts with L-aspartate. Residues R115, H143, and Q146 each contribute to the carbamoyl phosphate site. L-aspartate contacts are provided by R176 and R230. 2 residues coordinate carbamoyl phosphate: G271 and P272.

This sequence belongs to the aspartate/ornithine carbamoyltransferase superfamily. ATCase family. As to quaternary structure, heterododecamer (2C3:3R2) of six catalytic PyrB chains organized as two trimers (C3), and six regulatory PyrI chains organized as three dimers (R2).

It carries out the reaction carbamoyl phosphate + L-aspartate = N-carbamoyl-L-aspartate + phosphate + H(+). Its pathway is pyrimidine metabolism; UMP biosynthesis via de novo pathway; (S)-dihydroorotate from bicarbonate: step 2/3. Catalyzes the condensation of carbamoyl phosphate and aspartate to form carbamoyl aspartate and inorganic phosphate, the committed step in the de novo pyrimidine nucleotide biosynthesis pathway. In Brucella abortus (strain S19), this protein is Aspartate carbamoyltransferase catalytic subunit.